The primary structure comprises 931 residues: Phosphoenolpyruvate carboxylase (931 aa).

Active-site residues include histidine 138 and lysine 594.

It belongs to the PEPCase type 1 family. Mg(2+) is required as a cofactor.

It catalyses the reaction oxaloacetate + phosphate = phosphoenolpyruvate + hydrogencarbonate. Forms oxaloacetate, a four-carbon dicarboxylic acid source for the tricarboxylic acid cycle. The protein is Phosphoenolpyruvate carboxylase of Streptococcus agalactiae serotype III (strain NEM316).